A 210-amino-acid polypeptide reads, in one-letter code: MSVSDLRQSYEKSTLLEDSAAASPFDQFSQWFDQALAAQVPEPNAMTLATVDADGQPSARIVLIKGYDSRGFAFYTNYESRKGHDLLANPRAALLFFWQPLERQVRIEGRVEQVSAEESDAYFHSRPLGSRIGAWASRQSQPVTRAELEAREQEIRARYGEQPPRPPHWGGYRVVPTLFEFWQGRPSRLHDRLRYLPDGRGGWAIDRLSP.

Residues 7 to 10 (RQSY) and K65 each bind substrate. FMN is bound by residues 60–65 (RIVLIK), 75–76 (YT), R81, K82, and Q104. 3 residues coordinate substrate: Y122, R126, and S130. Residues 139-140 (QS) and W182 contribute to the FMN site. 188-190 (RLH) provides a ligand contact to substrate. R192 is an FMN binding site.

It belongs to the pyridoxamine 5'-phosphate oxidase family. Homodimer. It depends on FMN as a cofactor.

The catalysed reaction is pyridoxamine 5'-phosphate + O2 + H2O = pyridoxal 5'-phosphate + H2O2 + NH4(+). The enzyme catalyses pyridoxine 5'-phosphate + O2 = pyridoxal 5'-phosphate + H2O2. The protein operates within cofactor metabolism; pyridoxal 5'-phosphate salvage; pyridoxal 5'-phosphate from pyridoxamine 5'-phosphate: step 1/1. It participates in cofactor metabolism; pyridoxal 5'-phosphate salvage; pyridoxal 5'-phosphate from pyridoxine 5'-phosphate: step 1/1. In terms of biological role, catalyzes the oxidation of either pyridoxine 5'-phosphate (PNP) or pyridoxamine 5'-phosphate (PMP) into pyridoxal 5'-phosphate (PLP). The chain is Pyridoxine/pyridoxamine 5'-phosphate oxidase from Bordetella petrii (strain ATCC BAA-461 / DSM 12804 / CCUG 43448).